A 273-amino-acid chain; its full sequence is Dermonecrotic toxin SdSicTox-betaIIB1bxi (273 aa).

H4 is an active-site residue. The Mg(2+) site is built by E24 and D26. The active-site Nucleophile is H40. 2 disulfide bridges follow: C44-C50 and C46-C189. D84 provides a ligand contact to Mg(2+).

It belongs to the arthropod phospholipase D family. Class II subfamily. Requires Mg(2+) as cofactor. As to expression, expressed by the venom gland.

The protein resides in the secreted. It carries out the reaction an N-(acyl)-sphingosylphosphocholine = an N-(acyl)-sphingosyl-1,3-cyclic phosphate + choline. It catalyses the reaction an N-(acyl)-sphingosylphosphoethanolamine = an N-(acyl)-sphingosyl-1,3-cyclic phosphate + ethanolamine. The catalysed reaction is a 1-acyl-sn-glycero-3-phosphocholine = a 1-acyl-sn-glycero-2,3-cyclic phosphate + choline. The enzyme catalyses a 1-acyl-sn-glycero-3-phosphoethanolamine = a 1-acyl-sn-glycero-2,3-cyclic phosphate + ethanolamine. Dermonecrotic toxins cleave the phosphodiester linkage between the phosphate and headgroup of certain phospholipids (sphingolipid and lysolipid substrates), forming an alcohol (often choline) and a cyclic phosphate. This toxin acts on sphingomyelin (SM). It may also act on ceramide phosphoethanolamine (CPE), lysophosphatidylcholine (LPC) and lysophosphatidylethanolamine (LPE), but not on lysophosphatidylserine (LPS), and lysophosphatidylglycerol (LPG). It acts by transphosphatidylation, releasing exclusively cyclic phosphate products as second products. Induces dermonecrosis, hemolysis, increased vascular permeability, edema, inflammatory response, and platelet aggregation. This Sicarius cf. damarensis (strain GJB-2008) (Six-eyed sand spider) protein is Dermonecrotic toxin SdSicTox-betaIIB1bxi.